A 423-amino-acid chain; its full sequence is GTPase Obg (423 aa).

In terms of domain architecture, Obg spans 1-158; sequence MFYDEAKIYV…RWLVLELKLL (158 aa). Residues 159-328 form the OBG-type G domain; it reads ADVGLIGLPN…LLYHVSGLLA (170 aa). Residues 165–172, 190–194, 212–215, 281–284, and 309–311 each bind GTP; these read GLPNAGKS, FTTLT, DIPG, NKMD, and SAA. Mg(2+) is bound by residues S172 and T192. The OCT domain occupies 336–421; sequence VTAPEEEKVT…IGKFEFEYVE (86 aa).

It belongs to the TRAFAC class OBG-HflX-like GTPase superfamily. OBG GTPase family. In terms of assembly, monomer. It depends on Mg(2+) as a cofactor.

The protein resides in the cytoplasm. An essential GTPase which binds GTP, GDP and possibly (p)ppGpp with moderate affinity, with high nucleotide exchange rates and a fairly low GTP hydrolysis rate. Plays a role in control of the cell cycle, stress response, ribosome biogenesis and in those bacteria that undergo differentiation, in morphogenesis control. This Moorella thermoacetica (strain ATCC 39073 / JCM 9320) protein is GTPase Obg.